Here is a 201-residue protein sequence, read N- to C-terminus: Ciliary microtubule inner protein 2C (201 aa).

Belongs to the CIMIP2 family. As to quaternary structure, microtubule inner protein component of sperm flagellar doublet microtubules.

The protein resides in the cytoplasm. It localises to the cytoskeleton. It is found in the cilium axoneme. The protein localises to the flagellum axoneme. In terms of biological role, microtubule inner protein (MIP) part of the dynein-decorated doublet microtubules (DMTs) in cilia axoneme, which is required for motile cilia beating. Binds to the intra-tubulin interfaces. The polypeptide is Ciliary microtubule inner protein 2C (CIMIP2C) (Bos taurus (Bovine)).